Consider the following 301-residue polypeptide: Large ribosomal subunit protein uL18y (301 aa).

The segment at 247 to 267 (RAEPNHKKTEKSAPKEHKRYN) is disordered. The span at 249–261 (EPNHKKTEKSAPK) shows a compositional bias: basic and acidic residues.

Belongs to the universal ribosomal protein uL18 family. As to quaternary structure, component of the large ribosomal subunit (LSU).

The protein localises to the cytoplasm. Its subcellular location is the nucleus. The protein resides in the nucleolus. It is found in the nucleoplasm. Its function is as follows. Component of the ribosome, a large ribonucleoprotein complex responsible for the synthesis of proteins in the cell. The small ribosomal subunit (SSU) binds messenger RNAs (mRNAs) and translates the encoded message by selecting cognate aminoacyl-transfer RNA (tRNA) molecules. The large subunit (LSU) contains the ribosomal catalytic site termed the peptidyl transferase center (PTC), which catalyzes the formation of peptide bonds, thereby polymerizing the amino acids delivered by tRNAs into a polypeptide chain. The nascent polypeptides leave the ribosome through a tunnel in the LSU and interact with protein factors that function in enzymatic processing, targeting, and the membrane insertion of nascent chains at the exit of the ribosomal tunnel. Seems involved in the regulation of cell proliferation. Essential in leaf polarity establishment, probably having a role for translation in leaf dorsoventral patterning to specify leaf adaxial identity. This is Large ribosomal subunit protein uL18y from Arabidopsis thaliana (Mouse-ear cress).